The chain runs to 154 residues: uncharacterized protein (154 aa).

The protein resides in the mitochondrion. This is an uncharacterized protein from Marchantia polymorpha (Common liverwort).